The chain runs to 156 residues: Transcription antitermination protein NusB (156 aa).

This sequence belongs to the NusB family.

Its function is as follows. Involved in transcription antitermination. Required for transcription of ribosomal RNA (rRNA) genes. Binds specifically to the boxA antiterminator sequence of the ribosomal RNA (rrn) operons. This is Transcription antitermination protein NusB from Xanthomonas oryzae pv. oryzae (strain MAFF 311018).